The following is a 360-amino-acid chain: Biotin synthase (360 aa).

The Radical SAM core domain maps to 83–315 (FCGKYFDLCT…KSFLRYCGGR (233 aa)). [4Fe-4S] cluster-binding residues include cysteine 101, cysteine 105, and cysteine 108. [2Fe-2S] cluster-binding residues include serine 145, cysteine 180, cysteine 240, and arginine 310.

The protein belongs to the radical SAM superfamily. Biotin synthase family. Homodimer. [4Fe-4S] cluster serves as cofactor. The cofactor is [2Fe-2S] cluster.

The enzyme catalyses (4R,5S)-dethiobiotin + (sulfur carrier)-SH + 2 reduced [2Fe-2S]-[ferredoxin] + 2 S-adenosyl-L-methionine = (sulfur carrier)-H + biotin + 2 5'-deoxyadenosine + 2 L-methionine + 2 oxidized [2Fe-2S]-[ferredoxin]. Its pathway is cofactor biosynthesis; biotin biosynthesis; biotin from 7,8-diaminononanoate: step 2/2. In terms of biological role, catalyzes the conversion of dethiobiotin (DTB) to biotin by the insertion of a sulfur atom into dethiobiotin via a radical-based mechanism. In Fusobacterium nucleatum subsp. nucleatum (strain ATCC 25586 / DSM 15643 / BCRC 10681 / CIP 101130 / JCM 8532 / KCTC 2640 / LMG 13131 / VPI 4355), this protein is Biotin synthase.